Consider the following 299-residue polypeptide: 4-hydroxy-tetrahydrodipicolinate synthase 2 (299 aa).

T54 contacts pyruvate. Y142 (proton donor/acceptor) is an active-site residue. K170 acts as the Schiff-base intermediate with substrate in catalysis. V210 contributes to the pyruvate binding site.

The protein belongs to the DapA family. In terms of assembly, homotetramer; dimer of dimers.

The protein localises to the cytoplasm. The catalysed reaction is L-aspartate 4-semialdehyde + pyruvate = (2S,4S)-4-hydroxy-2,3,4,5-tetrahydrodipicolinate + H2O + H(+). It functions in the pathway amino-acid biosynthesis; L-lysine biosynthesis via DAP pathway; (S)-tetrahydrodipicolinate from L-aspartate: step 3/4. Catalyzes the condensation of (S)-aspartate-beta-semialdehyde [(S)-ASA] and pyruvate to 4-hydroxy-tetrahydrodipicolinate (HTPA). The polypeptide is 4-hydroxy-tetrahydrodipicolinate synthase 2 (Streptomyces coelicolor (strain ATCC BAA-471 / A3(2) / M145)).